A 620-amino-acid polypeptide reads, in one-letter code: Glutathione-regulated potassium-efflux system protein KefC (620 aa).

The next 12 membrane-spanning stretches (helical) occupy residues 4–24 (HTLI…PVAV), 26–46 (LGLG…PWGL), 54–74 (AILH…GLEL), 86–106 (VFGG…GFCV), 114–134 (VALL…MQAM), 149–169 (FAVL…IPLL), 178–198 (ASAF…VVLL), 218–238 (VFSA…EEAG), 271–291 (LLLG…TLVA), 296–316 (VLTL…LVAK), 326–346 (RWFA…FGAA), and 359–379 (ALTL…VLLT). Residues 399-518 (QPRVIIAGFG…AGVAQPERET (120 aa)) form the RCK N-terminal domain. The disordered stretch occupies residues 596–620 (HGWQGTREGKHTGNDADEPEVKPQP).

It belongs to the monovalent cation:proton antiporter 2 (CPA2) transporter (TC 2.A.37) family. KefC subfamily. Homodimer. Interacts with the regulatory subunit KefF.

It is found in the cell inner membrane. Pore-forming subunit of a potassium efflux system that confers protection against electrophiles. Catalyzes K(+)/H(+) antiport. This Cronobacter sakazakii (strain ATCC BAA-894) (Enterobacter sakazakii) protein is Glutathione-regulated potassium-efflux system protein KefC.